The sequence spans 490 residues: Phenylacetaldehyde synthase (490 aa).

The L-phenylalanine site is built by Pro-92, His-193, and His-308. Lys-309 is subject to N6-(pyridoxal phosphate)lysine. Phe-338 provides a ligand contact to L-phenylalanine.

Belongs to the group II decarboxylase family. Homodimer. The cofactor is pyridoxal 5'-phosphate. Expressed in roots, rosette leaves, stems, cauline leaves and flowers.

The enzyme catalyses L-phenylalanine + O2 + H2O + H(+) = 2-phenylacetaldehyde + H2O2 + NH4(+) + CO2. The catalysed reaction is L-dopa + O2 + H2O + H(+) = 3,4-dihydroxyphenylacetaldehyde + H2O2 + NH4(+) + CO2. Bifunctional enzyme that catalyzes the decarboxylation of L-phenylalanine to 2-phenylethylamine, which is then oxidized to form 2-phenylacetaldehyde, a constituent of floral scent. 2-phenylacetaldehyde is a precursor of 2-phenylethanol, another constituent of floral scent. Catalyzes both the decarboxylation and deamination of L-dopa to 3,4-dihydroxylphenylacetaldehyde (DHPAA). The protein is Phenylacetaldehyde synthase of Arabidopsis thaliana (Mouse-ear cress).